The following is a 335-amino-acid chain: Anthranilate phosphoribosyltransferase (335 aa).

Residues glycine 79, 82 to 83, threonine 87, 89 to 92, 107 to 115, and serine 119 each bind 5-phospho-alpha-D-ribose 1-diphosphate; these read GD, NIST, and KHGSRSVSS. Glycine 79 serves as a coordination point for anthranilate. Serine 91 lines the Mg(2+) pocket. Anthranilate is bound at residue arginine 165. Mg(2+) is bound by residues aspartate 223 and glutamate 224.

It belongs to the anthranilate phosphoribosyltransferase family. As to quaternary structure, homodimer. The cofactor is Mg(2+).

The enzyme catalyses N-(5-phospho-beta-D-ribosyl)anthranilate + diphosphate = 5-phospho-alpha-D-ribose 1-diphosphate + anthranilate. It functions in the pathway amino-acid biosynthesis; L-tryptophan biosynthesis; L-tryptophan from chorismate: step 2/5. In terms of biological role, catalyzes the transfer of the phosphoribosyl group of 5-phosphorylribose-1-pyrophosphate (PRPP) to anthranilate to yield N-(5'-phosphoribosyl)-anthranilate (PRA). The protein is Anthranilate phosphoribosyltransferase of Helicobacter pylori (strain Shi470).